A 377-amino-acid polypeptide reads, in one-letter code: E3 ubiquitin-protein ligase RING1 (377 aa).

The tract at residues 1-205 (MDGTEIAVSP…GGAGSEDSGD (205 aa)) is necessary for transcriptional repression. Phosphoserine is present on S9. Residues 19 to 59 (CPICLDMLKNTMTTKECLHRFCSDCIVTALRSGNKECPTCR) form an RING-type zinc finger. A phosphoserine mark is found at S111, S158, and S161. 2 disordered regions span residues 119-234 (QAMH…GEIE) and 280-325 (QQQE…PSLE). A compositionally biased stretch (acidic residues) spans 146–158 (DPGEGEGDGEDVS). The Nuclear localization signal motif lies at 172-175 (KRPR). The segment covering 176–199 (GGGAGGSSVGTGGGGTGGVGGGAG) has biased composition (gly residues). Phosphothreonine is present on residues T186 and T191. Residues S200 and S203 each carry the phosphoserine modification. Residues 201-377 (EDSGDRGGTL…LCYAPTKDPK (177 aa)) are necessary for interaction with CBX2. The segment covering 206-215 (RGGTLGGGTL) has biased composition (gly residues). A compositionally biased stretch (pro residues) spans 217–229 (PPSPPGAPSPPEP). A phosphoserine mark is found at S219 and S225. The segment covering 286–314 (EPGGPGGGASDTGGPDGGGGEGGGAGGGD) has biased composition (gly residues).

In terms of assembly, component of chromatin-associated Polycomb (PcG) complexes. Part of the E2F6.com-1 complex in G0 phase composed of E2F6, MGA, MAX, TFDP1, CBX3, BAT8, EUHMTASE1, RING1, RNF2/RING2 MBLR, L3MBTL2 and YAF2. Interacts with CBX2 and PCGF6. Component of a PRC1-like complex. Component of repressive BCOR complex containing Polycomb group subcomplex at least composed of RYBP, PCGF1, BCOR and RNF2/RING2. Interacts with BMI1, PHC2, PCGF2, RNF2; CBX6, CBX7 and CBX8. Interacts with MN1.

The protein localises to the nucleus speckle. The catalysed reaction is S-ubiquitinyl-[E2 ubiquitin-conjugating enzyme]-L-cysteine + [acceptor protein]-L-lysine = [E2 ubiquitin-conjugating enzyme]-L-cysteine + N(6)-ubiquitinyl-[acceptor protein]-L-lysine.. The protein operates within protein modification; protein ubiquitination. In terms of biological role, constitutes one of the E3 ubiquitin-protein ligases that mediate monoubiquitination of 'Lys-119' of histone H2A, thereby playing a central role in histone code and gene regulation. H2A 'Lys-119' ubiquitination gives a specific tag for epigenetic transcriptional repression and participates in X chromosome inactivation of female mammals. Essential component of a Polycomb group (PcG) multiprotein PRC1-like complex, a complex class required to maintain the transcriptionally repressive state of many genes, including Hox genes, throughout development. PcG PRC1 complex acts via chromatin remodeling and modification of histones, rendering chromatin heritably changed in its expressibility. Compared to RNF2/RING2, it does not have the main E3 ubiquitin ligase activity on histone H2A, and it may rather act as a modulator of RNF2/RING2 activity. This is E3 ubiquitin-protein ligase RING1 (RING1) from Gorilla gorilla gorilla (Western lowland gorilla).